Consider the following 268-residue polypeptide: 4-hydroxy-tetrahydrodipicolinate reductase (268 aa).

NAD(+)-binding positions include 10–15 (GASGRM) and Asp36. Arg37 is an NADP(+) binding site. Residues 99-101 (GTT) and 123-126 (SANM) each bind NAD(+). Catalysis depends on His156, which acts as the Proton donor/acceptor. A (S)-2,3,4,5-tetrahydrodipicolinate-binding site is contributed by His157. Lys160 serves as the catalytic Proton donor. Residue 166–167 (GT) participates in (S)-2,3,4,5-tetrahydrodipicolinate binding.

It belongs to the DapB family.

The protein localises to the cytoplasm. It carries out the reaction (S)-2,3,4,5-tetrahydrodipicolinate + NAD(+) + H2O = (2S,4S)-4-hydroxy-2,3,4,5-tetrahydrodipicolinate + NADH + H(+). The enzyme catalyses (S)-2,3,4,5-tetrahydrodipicolinate + NADP(+) + H2O = (2S,4S)-4-hydroxy-2,3,4,5-tetrahydrodipicolinate + NADPH + H(+). Its pathway is amino-acid biosynthesis; L-lysine biosynthesis via DAP pathway; (S)-tetrahydrodipicolinate from L-aspartate: step 4/4. Functionally, catalyzes the conversion of 4-hydroxy-tetrahydrodipicolinate (HTPA) to tetrahydrodipicolinate. The polypeptide is 4-hydroxy-tetrahydrodipicolinate reductase (Burkholderia thailandensis (strain ATCC 700388 / DSM 13276 / CCUG 48851 / CIP 106301 / E264)).